The following is a 139-amino-acid chain: Translation initiation factor 5A (139 aa).

Lys36 is modified (hypusine).

This sequence belongs to the eIF-5A family.

The protein resides in the cytoplasm. Functions by promoting the formation of the first peptide bond. The chain is Translation initiation factor 5A (eif5a) from Aeropyrum pernix (strain ATCC 700893 / DSM 11879 / JCM 9820 / NBRC 100138 / K1).